A 257-amino-acid polypeptide reads, in one-letter code: 3-dehydroquinate dehydratase (257 aa).

3-dehydroquinate-binding positions include 50 to 52 (EWR) and R86. H147 (proton donor/acceptor) is an active-site residue. The active-site Schiff-base intermediate with substrate is K174. Positions 216, 235, and 239 each coordinate 3-dehydroquinate.

The protein belongs to the type-I 3-dehydroquinase family. Homodimer.

It catalyses the reaction 3-dehydroquinate = 3-dehydroshikimate + H2O. The protein operates within metabolic intermediate biosynthesis; chorismate biosynthesis; chorismate from D-erythrose 4-phosphate and phosphoenolpyruvate: step 3/7. In terms of biological role, involved in the third step of the chorismate pathway, which leads to the biosynthesis of aromatic amino acids. Catalyzes the cis-dehydration of 3-dehydroquinate (DHQ) and introduces the first double bond of the aromatic ring to yield 3-dehydroshikimate. The polypeptide is 3-dehydroquinate dehydratase (Geobacillus kaustophilus (strain HTA426)).